An 838-amino-acid chain; its full sequence is Kinesin-like protein KIFC2 (838 aa).

Residues 23-32 (AAAAEPGDPA) are compositionally biased toward low complexity. 2 disordered regions span residues 23–48 (AAAA…DLPA) and 140–185 (LLQG…GQQP). A compositionally biased stretch (polar residues) spans 156 to 167 (DGSTSQEESPSH). Residues 186–351 (LQLEEDQRAW…SLRQGCGDLR (166 aa)) adopt a coiled-coil conformation. In terms of domain architecture, Kinesin motor spans 409-740 (NIRVLCRLRP…ARRSPRGRRI (332 aa)). An ATP-binding site is contributed by 484–491 (GQTGTGKT). The segment at 718–792 (RSPPTRARPP…SPGPPAPLRR (75 aa)) is disordered.

Belongs to the TRAFAC class myosin-kinesin ATPase superfamily. Kinesin family.

It localises to the cytoplasm. The protein localises to the cytoskeleton. In terms of biological role, may play a role in microtubule-dependent retrograde axonal transport. May function as the motor for the transport of multivesicular body (MVB)-like organelles in dendrites. This is Kinesin-like protein KIFC2 (KIFC2) from Homo sapiens (Human).